The sequence spans 514 residues: Activin receptor type-2A (514 aa).

The first 20 residues, 1–20 (MGAATKLAFAVFLISCSSAG), serve as a signal peptide directing secretion. Over 21 to 136 (SILGRSETKE…TSNPVTTKPP (116 aa)) the chain is Extracellular. 5 disulfides stabilise this stretch: Cys31–Cys61, Cys51–Cys79, Cys86–Cys105, Cys92–Cys104, and Cys106–Cys111. N-linked (GlcNAc...) asparagine glycosylation is found at Asn46, Asn67, and Asn88. Residues 137–162 (LFNTLLYSLVPIMVVAVIVLFSFWMY) form a helical membrane-spanning segment. The Cytoplasmic segment spans residues 163–514 (RHHKLAYPPV…VDFPPKESSL (352 aa)). Positions 193-486 (LQLLEVKARG…EERIIQMQKL (294 aa)) constitute a Protein kinase domain. Residues 199-207 (KARGRFGCV) and Lys220 each bind ATP. The active-site Proton acceptor is Asp323.

This sequence belongs to the protein kinase superfamily. TKL Ser/Thr protein kinase family. TGFB receptor subfamily.

The protein localises to the cell membrane. The catalysed reaction is L-threonyl-[receptor-protein] + ATP = O-phospho-L-threonyl-[receptor-protein] + ADP + H(+). It catalyses the reaction L-seryl-[receptor-protein] + ATP = O-phospho-L-seryl-[receptor-protein] + ADP + H(+). In terms of biological role, receptor for activin A, activin B and inhibin A. Involved in transmembrane signaling. The chain is Activin receptor type-2A (acvr2a) from Xenopus laevis (African clawed frog).